Here is a 242-residue protein sequence, read N- to C-terminus: Phosphoribosylaminoimidazole-succinocarboxamide synthase (242 aa).

Belongs to the SAICAR synthetase family.

The catalysed reaction is 5-amino-1-(5-phospho-D-ribosyl)imidazole-4-carboxylate + L-aspartate + ATP = (2S)-2-[5-amino-1-(5-phospho-beta-D-ribosyl)imidazole-4-carboxamido]succinate + ADP + phosphate + 2 H(+). The protein operates within purine metabolism; IMP biosynthesis via de novo pathway; 5-amino-1-(5-phospho-D-ribosyl)imidazole-4-carboxamide from 5-amino-1-(5-phospho-D-ribosyl)imidazole-4-carboxylate: step 1/2. This chain is Phosphoribosylaminoimidazole-succinocarboxamide synthase, found in Cyanothece sp. (strain PCC 7425 / ATCC 29141).